We begin with the raw amino-acid sequence, 105 residues long: Large ribosomal subunit protein uL24 (105 aa).

This sequence belongs to the universal ribosomal protein uL24 family. In terms of assembly, part of the 50S ribosomal subunit.

In terms of biological role, one of two assembly initiator proteins, it binds directly to the 5'-end of the 23S rRNA, where it nucleates assembly of the 50S subunit. Functionally, one of the proteins that surrounds the polypeptide exit tunnel on the outside of the subunit. The chain is Large ribosomal subunit protein uL24 from Xylella fastidiosa (strain M12).